The sequence spans 311 residues: Giardin subunit alpha-8 (311 aa).

Annexin repeat units follow at residues 5–73 (RKAY…IRCW), 75–146 (NRHE…DRWM), 154–223 (NNVK…AAHY), and 227–295 (EPSK…SLWR).

This sequence belongs to the annexin family. Giardin subunit alpha subfamily.

Its subcellular location is the cytoplasm. The protein localises to the cytoskeleton. Its function is as follows. Giardins are involved in parasite attachment to the intestinal mucosa and in the cytoskeletal disassembly and reassembly that marks the transition from infectious trophozoite to transmissible cyst. They may interact with other cytoskeletal proteins such as microtubules in the microribbons or crossbridges, to maintain the integrity of the ventral disk. This is Giardin subunit alpha-8 from Giardia intestinalis (Giardia lamblia).